Consider the following 332-residue polypeptide: Biotin synthase (332 aa).

The Radical SAM core domain occupies 46–275 (SDIQRASLLS…RARVRLSAGR (230 aa)). [4Fe-4S] cluster is bound by residues cysteine 61, cysteine 65, and cysteine 68. Positions 106, 138, 198, and 270 each coordinate [2Fe-2S] cluster.

It belongs to the radical SAM superfamily. Biotin synthase family. In terms of assembly, homodimer. The cofactor is [4Fe-4S] cluster. [2Fe-2S] cluster is required as a cofactor.

The catalysed reaction is (4R,5S)-dethiobiotin + (sulfur carrier)-SH + 2 reduced [2Fe-2S]-[ferredoxin] + 2 S-adenosyl-L-methionine = (sulfur carrier)-H + biotin + 2 5'-deoxyadenosine + 2 L-methionine + 2 oxidized [2Fe-2S]-[ferredoxin]. Its pathway is cofactor biosynthesis; biotin biosynthesis; biotin from 7,8-diaminononanoate: step 2/2. In terms of biological role, catalyzes the conversion of dethiobiotin (DTB) to biotin by the insertion of a sulfur atom into dethiobiotin via a radical-based mechanism. The chain is Biotin synthase from Methylobacterium sp. (strain 4-46).